The sequence spans 237 residues: MQKLAELYRGKAKTVYTTEDPDLLILSFRNDTSALDGQRIEQFDRKGMVNNKFNHFIMSKLEAAGIPTQMERLLSDTDALVKKLEMVPVECVIRNRAAGSLVKRLGIEEGMPLNPPLFDLFLKNDAMHDPMVNESYCRTFGWVSDEHLAQMKALSYRANEVLSQLFDDAGLILVDFKLEFGLYKGQVVLGDEFSPDGSRLWDKTTLAKMDKDRFRQNLGGLIEAYEEVALRLGVPLD.

The protein belongs to the SAICAR synthetase family.

The catalysed reaction is 5-amino-1-(5-phospho-D-ribosyl)imidazole-4-carboxylate + L-aspartate + ATP = (2S)-2-[5-amino-1-(5-phospho-beta-D-ribosyl)imidazole-4-carboxamido]succinate + ADP + phosphate + 2 H(+). Its pathway is purine metabolism; IMP biosynthesis via de novo pathway; 5-amino-1-(5-phospho-D-ribosyl)imidazole-4-carboxamide from 5-amino-1-(5-phospho-D-ribosyl)imidazole-4-carboxylate: step 1/2. In Edwardsiella ictaluri (strain 93-146), this protein is Phosphoribosylaminoimidazole-succinocarboxamide synthase.